A 286-amino-acid polypeptide reads, in one-letter code: GTP cyclohydrolase 1 type 2 homolog (286 aa).

Positions 66, 67, 103, 254, and 258 each coordinate a divalent metal cation.

It belongs to the GTP cyclohydrolase I type 2/NIF3 family. In terms of assembly, homohexamer.

This chain is GTP cyclohydrolase 1 type 2 homolog, found in Treponema pallidum (strain Nichols).